The chain runs to 552 residues: Dihydroxy-acid dehydratase (552 aa).

Mg(2+) is bound at residue Asp78. Cys119 contributes to the [2Fe-2S] cluster binding site. Residues Asp120 and Lys121 each coordinate Mg(2+). Lys121 bears the N6-carboxylysine mark. [2Fe-2S] cluster is bound at residue Cys190. Mg(2+) is bound at residue Glu441. Ser467 acts as the Proton acceptor in catalysis.

Belongs to the IlvD/Edd family. Homodimer. [2Fe-2S] cluster serves as cofactor. Mg(2+) is required as a cofactor.

It catalyses the reaction (2R)-2,3-dihydroxy-3-methylbutanoate = 3-methyl-2-oxobutanoate + H2O. It carries out the reaction (2R,3R)-2,3-dihydroxy-3-methylpentanoate = (S)-3-methyl-2-oxopentanoate + H2O. The protein operates within amino-acid biosynthesis; L-isoleucine biosynthesis; L-isoleucine from 2-oxobutanoate: step 3/4. It functions in the pathway amino-acid biosynthesis; L-valine biosynthesis; L-valine from pyruvate: step 3/4. Functionally, functions in the biosynthesis of branched-chain amino acids. Catalyzes the dehydration of (2R,3R)-2,3-dihydroxy-3-methylpentanoate (2,3-dihydroxy-3-methylvalerate) into 2-oxo-3-methylpentanoate (2-oxo-3-methylvalerate) and of (2R)-2,3-dihydroxy-3-methylbutanoate (2,3-dihydroxyisovalerate) into 2-oxo-3-methylbutanoate (2-oxoisovalerate), the penultimate precursor to L-isoleucine and L-valine, respectively. This Ignicoccus hospitalis (strain KIN4/I / DSM 18386 / JCM 14125) protein is Dihydroxy-acid dehydratase.